Reading from the N-terminus, the 387-residue chain is Phosphoglycerate kinase (387 aa).

Substrate contacts are provided by residues Asp21–Asn23, Arg36, His59–Arg62, Arg113, and Arg146. Residues Lys197, Glu314, and Gly340–Thr343 each bind ATP.

Belongs to the phosphoglycerate kinase family. Monomer.

The protein resides in the cytoplasm. It catalyses the reaction (2R)-3-phosphoglycerate + ATP = (2R)-3-phospho-glyceroyl phosphate + ADP. Its pathway is carbohydrate degradation; glycolysis; pyruvate from D-glyceraldehyde 3-phosphate: step 2/5. The sequence is that of Phosphoglycerate kinase from Photorhabdus laumondii subsp. laumondii (strain DSM 15139 / CIP 105565 / TT01) (Photorhabdus luminescens subsp. laumondii).